Here is a 220-residue protein sequence, read N- to C-terminus: Peptidyl-tRNA hydrolase (220 aa).

Residue Tyr-14 participates in tRNA binding. His-19 serves as the catalytic Proton acceptor. TRNA is bound by residues Phe-66, Asn-68, and Asn-114. The tract at residues 184–220 (QAFNSTDLRPRPEPVPAPQPADVSGPQETGPAERPEV) is disordered.

It belongs to the PTH family. As to quaternary structure, monomer.

The protein resides in the cytoplasm. It catalyses the reaction an N-acyl-L-alpha-aminoacyl-tRNA + H2O = an N-acyl-L-amino acid + a tRNA + H(+). Functionally, hydrolyzes ribosome-free peptidyl-tRNAs (with 1 or more amino acids incorporated), which drop off the ribosome during protein synthesis, or as a result of ribosome stalling. In terms of biological role, catalyzes the release of premature peptidyl moieties from peptidyl-tRNA molecules trapped in stalled 50S ribosomal subunits, and thus maintains levels of free tRNAs and 50S ribosomes. This chain is Peptidyl-tRNA hydrolase, found in Deinococcus deserti (strain DSM 17065 / CIP 109153 / LMG 22923 / VCD115).